Reading from the N-terminus, the 485-residue chain is Tektin-5 (485 aa).

Coiled-coil stretches lie at residues 114-185, 225-247, 307-385, and 421-444; these read RLTD…EVNC, QEQM…DAQH, QNMR…MAKE, and TIDD…QLLV.

This sequence belongs to the tektin family. In terms of assembly, microtubule inner protein component of sperm flagellar doublet microtubules. Interacts with TEKT3. Ubiquitinated, leading to its degradation. Deubiquitinated by USP16, promoting its stability.

Its subcellular location is the cytoplasm. It localises to the cytoskeleton. The protein resides in the flagellum axoneme. Its function is as follows. Sperm-specific microtubule inner protein (MIP) part of the dynein-decorated doublet microtubules (DMTs) in flagellar axoneme. Forms an extensive interaction network in different conformations that reinforces the helix bundle composed by other tektin proteins (TEKT1 to TEKT4) and MIPs to anchor the tektin bundle onto the tubulin wall of A-tubule of the sperm flagellum. This chain is Tektin-5 (TEKT5), found in Homo sapiens (Human).